The primary structure comprises 561 residues: MALIFANGHSDVPSTQPPIGKQKKEIGRESVNYHPSVWGDRFAILTAHEIEVDEITKQRAEKLKHDVLKMLHNVSVSLQDLNLIDEIQRLGVGYHFETEIENAMKRIYNSRDNDDDDLHAVALRFRLLRQHGYNVSSDVFKKFKDEKGEFKASLRENVRGLLSFYEAAYLGTADDTILDQAIDFTTDQLKSVLPNLNPPLSELVKLALDVPLHKRIERLQSRYFISIYQEEKERNEVLLEFAKLDFNVLQSLHKEELSQLSRWWKDNDFARKLPFIRDRLVECYFWILGVYYEPRYSRGRMMTTKVISLTSIMDDTYDVYGKLDELELLTTAIERWEWAAMDELPDYMKLHFSALLTAVENFEEELSKEGKAYRISYFKNAYTKLAKAYLEEARWASADYVPTLEEYMKHAQVSSAYPVLTLSSLLGMGATATKEAFEWAINMPNAINAISVVCRLKDDITSAELEQQRVHVATAVECYIKENGTTYEETCKLFKQKVDSAWKEINKEWMDPLQVPREIIKRAVNFARVIEFLYRYKDMYTESAGETKECIAMVLVDRFVD.

Residues 6 to 26 (ANGHSDVPSTQPPIGKQKKEI) form a disordered region. Residues Arg-277, Asp-314, Asp-318, Arg-455, and Asp-458 each contribute to the (2E,6E)-farnesyl diphosphate site. Mg(2+)-binding residues include Asp-314 and Asp-318. The DDXXD motif signature appears at 314–318 (DDTYD). Asp-458, Ser-462, and Glu-466 together coordinate Mg(2+).

It belongs to the terpene synthase family. Tpsa subfamily. As to quaternary structure, monomer. It depends on Mg(2+) as a cofactor.

The protein resides in the cytoplasm. It catalyses the reaction (2E,6E)-farnesyl diphosphate = beta-ylangene + diphosphate. The enzyme catalyses (2E,6E)-farnesyl diphosphate = beta-copaene + diphosphate. The catalysed reaction is (2E,6E)-farnesyl diphosphate = beta-cubebene + diphosphate. It participates in secondary metabolite biosynthesis; terpenoid biosynthesis. In terms of biological role, sesquiterpene synthase involved in the biosynthesis of volatile organic compounds. Mediates the conversion of (2E,6E)-farnesyl diphosphate (FPP) into beta-ylangene, beta-copaene and beta-cubebene. Does not use (2E)-geranyl diphosphate (GPP) as substrate. This chain is Sesquiterpene synthase TPS2, found in Cananga odorata (Ylang-ylang tree).